The following is a 35-amino-acid chain: Dermonecrotic toxin LrSicTox-alphaI-1 (35 aa).

Residue His11 is part of the active site. Residue Asp33 participates in Mg(2+) binding.

It belongs to the arthropod phospholipase D family. Class II subfamily. It depends on Mg(2+) as a cofactor. Post-translationally, contains 2 disulfide bonds. As to expression, expressed by the venom gland.

Its subcellular location is the secreted. The enzyme catalyses an N-(acyl)-sphingosylphosphocholine = an N-(acyl)-sphingosyl-1,3-cyclic phosphate + choline. It carries out the reaction an N-(acyl)-sphingosylphosphoethanolamine = an N-(acyl)-sphingosyl-1,3-cyclic phosphate + ethanolamine. It catalyses the reaction a 1-acyl-sn-glycero-3-phosphocholine = a 1-acyl-sn-glycero-2,3-cyclic phosphate + choline. The catalysed reaction is a 1-acyl-sn-glycero-3-phosphoethanolamine = a 1-acyl-sn-glycero-2,3-cyclic phosphate + ethanolamine. Its function is as follows. Dermonecrotic toxins cleave the phosphodiester linkage between the phosphate and headgroup of certain phospholipids (sphingolipid and lysolipid substrates), forming an alcohol (often choline) and a cyclic phosphate. This toxin acts on sphingomyelin (SM). It may also act on ceramide phosphoethanolamine (CPE), lysophosphatidylcholine (LPC) and lysophosphatidylethanolamine (LPE), but not on lysophosphatidylserine (LPS), and lysophosphatidylglycerol (LPG). It acts by transphosphatidylation, releasing exclusively cyclic phosphate products as second products. Induces dermonecrosis, hemolysis, increased vascular permeability, edema, inflammatory response, and platelet aggregation. This Loxosceles reclusa (Brown recluse spider) protein is Dermonecrotic toxin LrSicTox-alphaI-1.